Reading from the N-terminus, the 421-residue chain is ATP-dependent RNA helicase RhlB (421 aa).

Residues 9-37 (QKFSDFALHPQVVEALEKKGFYNCTPIQA) carry the Q motif motif. Residues 40 to 219 (LPLTLAGRDV…FEQMNNAEYV (180 aa)) form the Helicase ATP-binding domain. 53 to 60 (AQTGTGKT) serves as a coordination point for ATP. Positions 165–168 (DEAD) match the DEAD box motif. The 146-residue stretch at 245–390 (RLLQTLIEEE…VSKYNPEALM (146 aa)) folds into the Helicase C-terminal domain. The disordered stretch occupies residues 396–421 (PLRLTRSRPGNGPRRAGAPRNRRRSG). Residues 402-414 (SRPGNGPRRAGAP) are compositionally biased toward low complexity.

It belongs to the DEAD box helicase family. RhlB subfamily. Component of the RNA degradosome, which is a multiprotein complex involved in RNA processing and mRNA degradation.

The protein resides in the cytoplasm. The catalysed reaction is ATP + H2O = ADP + phosphate + H(+). Its function is as follows. DEAD-box RNA helicase involved in RNA degradation. Has RNA-dependent ATPase activity and unwinds double-stranded RNA. In Salmonella agona (strain SL483), this protein is ATP-dependent RNA helicase RhlB.